A 2723-amino-acid chain; its full sequence is Zinc finger protein 292 (2723 aa).

Residues 569-591 form a C2H2-type 1 zinc finger; it reads YSCPICAKNFNSKETFVPHVTLH. Positions 608–633 are disordered; that stretch reads RLGRPPKITTTNENQKTNTVAKQEQR. A compositionally biased stretch (polar residues) spans 615–629; the sequence is ITTTNENQKTNTVAK. A Phosphoserine modification is found at serine 654. C2H2-type zinc fingers lie at residues 681 to 705, 722 to 744, 750 to 774, 779 to 803, and 807 to 831; these read FNCPVTFCKKGFKYFKNLIAHVKGH, VICQYCRRHFVSVTHLNDHLQMH, YICIQMKCKAGFNSYAELLTHRKEH, AKCMFPKCGRIFSEAYLLYDHEAQH, and YTCKFTGCGKVYRSQGELEKHLDDH. Residues 825–834 show a composition bias toward basic and acidic residues; that stretch reads EKHLDDHSTP. The interval 825–860 is disordered; that stretch reads EKHLDDHSTPPEKVLPPEAQLNSSGDSIQPSEVNQN. Residues 844–860 show a composition bias toward polar residues; it reads QLNSSGDSIQPSEVNQN. The C2H2-type 7 zinc finger occupies 1098–1123; that stretch reads FSCQVEGCTRTYNSSQSIGKHMKTAH. An N6-acetyllysine modification is found at lysine 1117. Serine 1159 carries the phosphoserine modification. The disordered stretch occupies residues 1331–1364; sequence SSTNAQQSAPEKVKKDRGRGPNGKERKPKHNKRA. Residues 1341–1355 are compositionally biased toward basic and acidic residues; the sequence is EKVKKDRGRGPNGKE. Residues 1375 to 1397 form a C2H2-type 8; degenerate zinc finger; that stretch reads FICSRCYRAFTNPRSLGGHLSKR. The span at 1588 to 1627 shows a compositional bias: polar residues; sequence SFPNSGGPSQNFTSNSSRVSVISGPQNTRSSHLNKKGNSA. The interval 1588–1634 is disordered; it reads SFPNSGGPSQNFTSNSSRVSVISGPQNTRSSHLNKKGNSASKRRKKV. Residues 1827-1854 are a coiled coil; it reads QSEVSHKEDQIQEILEGLQKLKLENDLS. 2 consecutive C2H2-type zinc fingers follow at residues 1902–1927 and 1947–1972; these read FVCQNQGCNYSAMTKDALFKHYGKIH and FKCVVPTCTKTFTRNSNLRAHCQLVH. Residues 1986 to 2023 are disordered; the sequence is RPYGRKSQSENVPASRSTQVKKQLAMTEENKKESQPAL. Positions 1994–2006 are enriched in polar residues; that stretch reads SENVPASRSTQVK. An N6-acetyllysine modification is found at lysine 2042. Positions 2074 to 2103 are disordered; that stretch reads NTQTKGRKIRRHKKEKEEKKRKKPVSQSLE. Residues 2078-2097 show a composition bias toward basic residues; that stretch reads KGRKIRRHKKEKEEKKRKKP. 4 C2H2-type zinc fingers span residues 2114 to 2139, 2172 to 2197, 2216 to 2241, and 2256 to 2281; these read YRCVHQGCFAAFTIQQNLILHYQAVH, FRCQVSDCSRIFQAITGLIQHYMKLH, FPCDQLECKSSFTTYLNYVVHLEADH, and YKCDCEGCDRIYATRSNLLRHIFNKH. Composition is skewed to basic residues over residues 2285 to 2294 and 2312 to 2322; these read HKAHLIRPRR and KSKHRGTKHSR. The tract at residues 2285-2345 is disordered; the sequence is HKAHLIRPRR…KKKNNLENKN (61 aa). The segment at 2386–2410 adopts a C2H2-type 15 zinc-finger fold; the sequence is YPCMIKGCTSVVTSESNIIRHYKCH. Positions 2441–2452 are enriched in basic and acidic residues; sequence QEGAKNDVKDSD. Disordered regions lie at residues 2441–2480, 2530–2564, and 2606–2631; these read QEGAKNDVKDSDTCVSESNDNSRTTATVSQKEVEKNEKDE, LKRVNKEKNVSQNKKRKVEKAEPASAAELSSVRKE, and QKKNTDKDHPNTGNKKGSHSNSRKNI. A compositionally biased stretch (polar residues) spans 2453–2470; that stretch reads TCVSESNDNSRTTATVSQ. Positions 2606–2615 are enriched in basic and acidic residues; the sequence is QKKNTDKDHP.

The protein belongs to the krueppel C2H2-type zinc-finger protein family.

The protein resides in the nucleus. In terms of biological role, may be involved in transcriptional regulation. In Homo sapiens (Human), this protein is Zinc finger protein 292 (ZNF292).